An 838-amino-acid polypeptide reads, in one-letter code: AP-4 complex subunit beta (838 aa).

A hinge region spans residues 582 to 673 (NSSKQTTSIN…NQNNNQNNNQ (92 aa)). Residues 648-683 (ITDGNQNNNQNNNQNNNQNNNQNNNQNNQNNNNQNN) are disordered. Positions 652 to 683 (NQNNNQNNNQNNNQNNNQNNNQNNQNNNNQNN) are enriched in low complexity. The segment at 674-838 (NNQNNNNQNN…LSIPIPKIFN (165 aa)) is ear.

Belongs to the adaptor complexes large subunit family. In terms of assembly, may be part of the adaptor protein complex 4 (AP-4), a heterotetramer composed of two large adaptins (epsilon-type subunitand beta-type subunit), a medium adaptin (mu-type subunit) and a small adaptin (sigma-type).

It is found in the golgi apparatus. The protein resides in the trans-Golgi network membrane. Its function is as follows. Probable component of an adaptor protein complex. Adaptor protein complexes are vesicle coat components involved both in vesicle formation and cargo selection. They control the vesicular transport of proteins in different trafficking pathways. The protein is AP-4 complex subunit beta (ap4b1) of Dictyostelium discoideum (Social amoeba).